The sequence spans 241 residues: Small ribosomal subunit protein uS3 (241 aa).

The region spanning 39-107 is the KH type-2 domain; that stretch reads IRKYLEKELK…ETHLNIVEVR (69 aa). Residues 214–241 are disordered; it reads ASERRATEGDAAHGGGGDRERGRRRENA.

Belongs to the universal ribosomal protein uS3 family. Part of the 30S ribosomal subunit. Forms a tight complex with proteins S10 and S14.

Functionally, binds the lower part of the 30S subunit head. Binds mRNA in the 70S ribosome, positioning it for translation. The chain is Small ribosomal subunit protein uS3 from Mesorhizobium japonicum (strain LMG 29417 / CECT 9101 / MAFF 303099) (Mesorhizobium loti (strain MAFF 303099)).